Reading from the N-terminus, the 500-residue chain is Aspartyl/glutamyl-tRNA(Asn/Gln) amidotransferase subunit B (500 aa).

This sequence belongs to the GatB/GatE family. GatB subfamily. Heterotrimer of A, B and C subunits.

It carries out the reaction L-glutamyl-tRNA(Gln) + L-glutamine + ATP + H2O = L-glutaminyl-tRNA(Gln) + L-glutamate + ADP + phosphate + H(+). The enzyme catalyses L-aspartyl-tRNA(Asn) + L-glutamine + ATP + H2O = L-asparaginyl-tRNA(Asn) + L-glutamate + ADP + phosphate + 2 H(+). Its function is as follows. Allows the formation of correctly charged Asn-tRNA(Asn) or Gln-tRNA(Gln) through the transamidation of misacylated Asp-tRNA(Asn) or Glu-tRNA(Gln) in organisms which lack either or both of asparaginyl-tRNA or glutaminyl-tRNA synthetases. The reaction takes place in the presence of glutamine and ATP through an activated phospho-Asp-tRNA(Asn) or phospho-Glu-tRNA(Gln). In Sinorhizobium medicae (strain WSM419) (Ensifer medicae), this protein is Aspartyl/glutamyl-tRNA(Asn/Gln) amidotransferase subunit B.